Reading from the N-terminus, the 304-residue chain is Protease HtpX homolog 1 (304 aa).

Helical transmembrane passes span 17 to 37 and 39 to 59; these read VTLF…IALL and SWVL…WFSD. His-140 is a binding site for Zn(2+). Residue Glu-141 is part of the active site. A Zn(2+)-binding site is contributed by His-144. 2 helical membrane passes run 151-171 and 186-206; these read AVIT…RFAF and AVLA…FLLI. Glu-214 serves as a coordination point for Zn(2+).

The protein belongs to the peptidase M48B family. Zn(2+) serves as cofactor.

It localises to the cell membrane. The protein is Protease HtpX homolog 1 of Streptomyces coelicolor (strain ATCC BAA-471 / A3(2) / M145).